The following is a 70-amino-acid chain: MKDYEIVFTVFSSIIFAFLLFRLCKFCCVFCCALCNVPDNVYGRKRPRGSIVVEENEDDGNGEKEGLLNV.

Residues 15 to 37 form a helical membrane-spanning segment; that stretch reads IFAFLLFRLCKFCCVFCCALCNV.

It is found in the membrane. This is an uncharacterized protein from Dictyostelium discoideum (Social amoeba).